We begin with the raw amino-acid sequence, 1146 residues long: DNA polymerase II large subunit (1146 aa).

This sequence belongs to the archaeal DNA polymerase II family. In terms of assembly, heterodimer of a large subunit and a small subunit.

It carries out the reaction DNA(n) + a 2'-deoxyribonucleoside 5'-triphosphate = DNA(n+1) + diphosphate. The enzyme catalyses Exonucleolytic cleavage in the 3'- to 5'-direction to yield nucleoside 5'-phosphates.. In terms of biological role, possesses two activities: a DNA synthesis (polymerase) and an exonucleolytic activity that degrades single-stranded DNA in the 3'- to 5'-direction. Has a template-primer preference which is characteristic of a replicative DNA polymerase. The protein is DNA polymerase II large subunit of Methanosarcina barkeri (strain Fusaro / DSM 804).